The sequence spans 319 residues: Acetyl-coenzyme A carboxylase carboxyl transferase subunit alpha (319 aa).

Residues 38–293 (HALQDKLRLR…KAVLLNELDA (256 aa)) form the CoA carboxyltransferase C-terminal domain.

This sequence belongs to the AccA family. Acetyl-CoA carboxylase is a heterohexamer composed of biotin carboxyl carrier protein (AccB), biotin carboxylase (AccC) and two subunits each of ACCase subunit alpha (AccA) and ACCase subunit beta (AccD).

It localises to the cytoplasm. The catalysed reaction is N(6)-carboxybiotinyl-L-lysyl-[protein] + acetyl-CoA = N(6)-biotinyl-L-lysyl-[protein] + malonyl-CoA. It participates in lipid metabolism; malonyl-CoA biosynthesis; malonyl-CoA from acetyl-CoA: step 1/1. Its function is as follows. Component of the acetyl coenzyme A carboxylase (ACC) complex. First, biotin carboxylase catalyzes the carboxylation of biotin on its carrier protein (BCCP) and then the CO(2) group is transferred by the carboxyltransferase to acetyl-CoA to form malonyl-CoA. The sequence is that of Acetyl-coenzyme A carboxylase carboxyl transferase subunit alpha from Stenotrophomonas maltophilia (strain R551-3).